The chain runs to 201 residues: LexA repressor (201 aa).

Residues 28 to 48 (LREIAAQLGISGTLGVMKHLE) constitute a DNA-binding region (H-T-H motif). Active-site for autocatalytic cleavage activity residues include S120 and K157.

Belongs to the peptidase S24 family. Homodimer.

It catalyses the reaction Hydrolysis of Ala-|-Gly bond in repressor LexA.. Represses a number of genes involved in the response to DNA damage (SOS response), including recA and lexA. In the presence of single-stranded DNA, RecA interacts with LexA causing an autocatalytic cleavage which disrupts the DNA-binding part of LexA, leading to derepression of the SOS regulon and eventually DNA repair. This is LexA repressor from Citrifermentans bemidjiense (strain ATCC BAA-1014 / DSM 16622 / JCM 12645 / Bem) (Geobacter bemidjiensis).